The primary structure comprises 193 residues: Thymidylate kinase (193 aa).

7-14 (GIDGCGKS) is a binding site for ATP.

Belongs to the thymidylate kinase family.

It carries out the reaction dTMP + ATP = dTDP + ADP. In terms of biological role, phosphorylation of dTMP to form dTDP in both de novo and salvage pathways of dTTP synthesis. The chain is Thymidylate kinase from Coprothermobacter proteolyticus (strain ATCC 35245 / DSM 5265 / OCM 4 / BT).